We begin with the raw amino-acid sequence, 125 residues long: Large ribosomal subunit protein bL12 (125 aa).

The protein belongs to the bacterial ribosomal protein bL12 family. In terms of assembly, homodimer. Part of the ribosomal stalk of the 50S ribosomal subunit. Forms a multimeric L10(L12)X complex, where L10 forms an elongated spine to which 2 to 4 L12 dimers bind in a sequential fashion. Binds GTP-bound translation factors.

Its function is as follows. Forms part of the ribosomal stalk which helps the ribosome interact with GTP-bound translation factors. Is thus essential for accurate translation. This is Large ribosomal subunit protein bL12 from Bradyrhizobium sp. (strain ORS 278).